The primary structure comprises 269 residues: Hydroxyethylthiazole kinase (269 aa).

Met45 provides a ligand contact to substrate. 2 residues coordinate ATP: Arg121 and Thr167. Gly194 contacts substrate.

Belongs to the Thz kinase family. It depends on Mg(2+) as a cofactor.

The catalysed reaction is 5-(2-hydroxyethyl)-4-methylthiazole + ATP = 4-methyl-5-(2-phosphooxyethyl)-thiazole + ADP + H(+). It functions in the pathway cofactor biosynthesis; thiamine diphosphate biosynthesis; 4-methyl-5-(2-phosphoethyl)-thiazole from 5-(2-hydroxyethyl)-4-methylthiazole: step 1/1. Its function is as follows. Catalyzes the phosphorylation of the hydroxyl group of 4-methyl-5-beta-hydroxyethylthiazole (THZ). This Geobacillus sp. (strain WCH70) protein is Hydroxyethylthiazole kinase.